Here is a 123-residue protein sequence, read N- to C-terminus: Large ribosomal subunit protein bL12 (123 aa).

It belongs to the bacterial ribosomal protein bL12 family. In terms of assembly, homodimer. Part of the ribosomal stalk of the 50S ribosomal subunit. Forms a multimeric L10(L12)X complex, where L10 forms an elongated spine to which 2 to 4 L12 dimers bind in a sequential fashion. Binds GTP-bound translation factors.

Its function is as follows. Forms part of the ribosomal stalk which helps the ribosome interact with GTP-bound translation factors. Is thus essential for accurate translation. The sequence is that of Large ribosomal subunit protein bL12 from Neisseria meningitidis serogroup C (strain 053442).